The sequence spans 265 residues: Neutrophil elastase (265 aa).

Positions 1–26 (MALGRLSSRTLAAMLLALFLGGPALA) are cleaved as a signal peptide. The region spanning 29–247 (IVGGRPARPH…FADWINSIIR (219 aa)) is the Peptidase S1 domain. The cysteines at positions 54 and 70 are disulfide-linked. Residues H69 and D116 each act as charge relay system in the active site. 2 N-linked (GlcNAc...) asparagine glycosylation sites follow: N123 and N172. Intrachain disulfides connect C150/C208, C180/C187, and C198/C223. S202 acts as the Charge relay system in catalysis.

It belongs to the peptidase S1 family. Elastase subfamily. As to quaternary structure, interacts with NOTCH2NL.

It catalyses the reaction Hydrolysis of proteins, including elastin. Preferential cleavage: Val-|-Xaa &gt; Ala-|-Xaa.. Serine protease that modifies the functions of natural killer cells, monocytes and granulocytes. Inhibits C5a-dependent neutrophil enzyme release and chemotaxis. Promotes blood coagulation. Through the activation of the platelet fibrinogen receptor integrin alpha-IIb/beta-3, potentiates platelet aggregation induced by a threshold concentration of cathepsin G (CTSG). Cleaves and thus inactivates tissue factor pathway inhibitor (TFPI). Capable of killing E.coli; probably digests outer membrane protein A (ompA) in E.coli. The sequence is that of Neutrophil elastase (Elane) from Mus musculus (Mouse).